Consider the following 636-residue polypeptide: Threonine--tRNA ligase (636 aa).

Positions 1–63 (MPMITITLPD…EHDASLRIIT (63 aa)) constitute a TGS domain. The interval 245–536 (DHRKIGKAQD…LIEHHAGAFP (292 aa)) is catalytic. The Zn(2+) site is built by C336, H387, and H513.

Belongs to the class-II aminoacyl-tRNA synthetase family. In terms of assembly, homodimer. It depends on Zn(2+) as a cofactor.

It localises to the cytoplasm. The catalysed reaction is tRNA(Thr) + L-threonine + ATP = L-threonyl-tRNA(Thr) + AMP + diphosphate + H(+). Functionally, catalyzes the attachment of threonine to tRNA(Thr) in a two-step reaction: L-threonine is first activated by ATP to form Thr-AMP and then transferred to the acceptor end of tRNA(Thr). Also edits incorrectly charged L-seryl-tRNA(Thr). The sequence is that of Threonine--tRNA ligase from Xanthomonas campestris pv. campestris (strain 8004).